A 204-amino-acid polypeptide reads, in one-letter code: Protease (204 aa).

Catalysis depends on residues His-54, Asp-71, and Cys-122.

The protein belongs to the peptidase C5 family. In terms of assembly, interacts with protease cofactor pVI-C; this interaction is necessary for protease activation.

The protein localises to the virion. It is found in the host nucleus. The enzyme catalyses Cleaves proteins of the adenovirus and its host cell at two consensus sites: -Yaa-Xaa-Gly-Gly-|-Xaa- and -Yaa-Xaa-Gly-Xaa-|-Gly- (in which Yaa is Met, Ile or Leu, and Xaa is any amino acid).. Its activity is regulated as follows. Requires DNA and protease cofactor for maximal activation. Inside nascent virions, becomes partially activated by binding to the viral DNA, allowing it to cleave the cofactor that binds to the protease and fully activates it. Actin, like the viral protease cofactor, seems to act as a cofactor in the cleavage of cytokeratin 18 and of actin itself. Cleaves viral precursor proteins (pTP, pIIIa, pVI, pVII, pVIII, and pX) inside newly assembled particles giving rise to mature virions. Protease complexed to its cofactor slides along the viral DNA to specifically locate and cleave the viral precursors. Mature virions have a weakened organization compared to the unmature virions, thereby facilitating subsequent uncoating. Without maturation, the particle lacks infectivity and is unable to uncoat. Late in adenovirus infection, in the cytoplasm, may participate in the cytoskeleton destruction. Cleaves host cell cytoskeletal keratins K7 and K18. This chain is Protease, found in Bos taurus (Bovine).